Consider the following 376-residue polypeptide: Sulfate/thiosulfate import ATP-binding protein CysA (376 aa).

Residues 3 to 237 enclose the ABC transporter domain; it reads IRLDNISKHF…PNSRFVFDFF (235 aa). 35–42 provides a ligand contact to ATP; the sequence is GPSGSGKT.

The protein belongs to the ABC transporter superfamily. Sulfate/tungstate importer (TC 3.A.1.6) family. The complex is composed of two ATP-binding proteins (CysA), two transmembrane proteins (CysT and CysW) and a solute-binding protein (CysP).

It localises to the cell inner membrane. It catalyses the reaction sulfate(out) + ATP + H2O = sulfate(in) + ADP + phosphate + H(+). The enzyme catalyses thiosulfate(out) + ATP + H2O = thiosulfate(in) + ADP + phosphate + H(+). Functionally, part of the ABC transporter complex CysAWTP involved in sulfate/thiosulfate import. Responsible for energy coupling to the transport system. The chain is Sulfate/thiosulfate import ATP-binding protein CysA from Vibrio cholerae serotype O1 (strain ATCC 39315 / El Tor Inaba N16961).